The chain runs to 515 residues: Bifunctional solanapyrone synthase (515 aa).

An N-terminal signal peptide occupies residues 1 to 25; the sequence is MRLIILNLLSLGITPSVVGHSGPHR. The N-linked (GlcNAc...) asparagine glycan is linked to Asn66. One can recognise an FAD-binding PCMH-type domain in the interval 91 to 261; sequence APKNPACIYT…THIVQRTYPL (171 aa). His128 is modified (pros-8alpha-FAD histidine). Residues Asn274 and Asn355 are each glycosylated (N-linked (GlcNAc...) asparagine).

This sequence belongs to the oxygen-dependent FAD-linked oxidoreductase family. The cofactor is FAD.

It carries out the reaction prosolanapyrone II + O2 = prosolanapyrone III + H2O2. The enzyme catalyses prosolanapyrone III = (-)-solanapyrone A. It catalyses the reaction prosolanapyrone III = solanapyrone D. Its pathway is phytotoxin biosynthesis. Functionally, bifunctional solanapyrone synthase; part of the gene cluster that mediates the biosynthesis of the phytotoxin solanapyrone, a causal agent of early blight disease of potato and tomato. The prosolanapyrone synthase sol1 is a polyketide synthase that produces the octaketide desmethylprosolanapyrone I via sequential condensations of 7 malonyl-CoA units with one acetyl-CoA unit, and one methylation step. The octaketide backbone is further methylated by the sol2 O-methyltransferase to yield prosolanapyrone I. Prosolanapyrone I is hydroxylated to prosolanapyrone II by the cytochrome P450 monooxygenase sol6. The solanapyrone synthase sol5 then catalyzes the oxidation of prosolanapyrone II and the subsequent Diels Alder cycloisomerization of the product prosolanapyrone III to solanapyrones A and D. Solanapyrones A and D are then converted into solanapyrones B and E, respectively, by the sol3 dehydrogenase. The chain is Bifunctional solanapyrone synthase (sol5) from Alternaria solani.